The primary structure comprises 256 residues: Thiazole synthase (256 aa).

Lys-95 serves as the catalytic Schiff-base intermediate with DXP. Residues Gly-156, 182-183, and 204-205 each bind 1-deoxy-D-xylulose 5-phosphate; these read AG and NT.

It belongs to the ThiG family. In terms of assembly, homotetramer. Forms heterodimers with either ThiH or ThiS.

The protein localises to the cytoplasm. It carries out the reaction [ThiS sulfur-carrier protein]-C-terminal-Gly-aminoethanethioate + 2-iminoacetate + 1-deoxy-D-xylulose 5-phosphate = [ThiS sulfur-carrier protein]-C-terminal Gly-Gly + 2-[(2R,5Z)-2-carboxy-4-methylthiazol-5(2H)-ylidene]ethyl phosphate + 2 H2O + H(+). Its pathway is cofactor biosynthesis; thiamine diphosphate biosynthesis. In terms of biological role, catalyzes the rearrangement of 1-deoxy-D-xylulose 5-phosphate (DXP) to produce the thiazole phosphate moiety of thiamine. Sulfur is provided by the thiocarboxylate moiety of the carrier protein ThiS. In vitro, sulfur can be provided by H(2)S. The chain is Thiazole synthase from Salmonella typhi.